Consider the following 199-residue polypeptide: MNEYIESCQQEKRTYDEEGVREAVRLFLKSIGEDPGREGLVETPDRIARACRELFAGLQASPADVLEKHFDVDTDELVLVKDIELYSVCEHHLLPFHGVAHVGYIPAKDGVMGLSKLARLVEVYARRPQVQERLTQQIADALVEYAGARGVIVVTECEHLCMSMRGIKKSSARTVTSAVRGLLRNPATRAEAMSLILDK.

Residues C89, H92, and C161 each coordinate Zn(2+).

Belongs to the GTP cyclohydrolase I family. In terms of assembly, homomer.

The catalysed reaction is GTP + H2O = 7,8-dihydroneopterin 3'-triphosphate + formate + H(+). The protein operates within cofactor biosynthesis; 7,8-dihydroneopterin triphosphate biosynthesis; 7,8-dihydroneopterin triphosphate from GTP: step 1/1. This Bifidobacterium longum (strain DJO10A) protein is GTP cyclohydrolase 1.